The following is a 100-amino-acid chain: Replication restart protein PriB (100 aa).

Residues 1–99 (MGFNNLVSLA…LRIQNIQEYK (99 aa)) enclose the SSB domain.

Belongs to the PriB family. Homodimer. Interacts with PriA and DnaT. Component of the replication restart primosome. Primosome assembly occurs via a 'hand-off' mechanism. PriA binds to replication forks, subsequently PriB then DnaT bind; DnaT then displaces ssDNA to generate the helicase loading substrate.

In terms of biological role, involved in the restart of stalled replication forks, which reloads the replicative helicase on sites other than the origin of replication; the PriA-PriB pathway is the major replication restart pathway. During primosome assembly it facilitates complex formation between PriA and DnaT on DNA; stabilizes PriA on DNA. Stimulates the DNA unwinding activity of PriA helicase. This is Replication restart protein PriB from Neisseria meningitidis serogroup B (strain ATCC BAA-335 / MC58).